The following is a 544-amino-acid chain: (E,E)-germacrene B synthase (544 aa).

Positions 296, 300, and 449 each coordinate Mg(2+). Positions 296–300 match the DDXXD motif motif; it reads DDTFD.

It belongs to the terpene synthase family. Mg(2+) serves as cofactor. The cofactor is Mn(2+).

It is found in the cytoplasm. It catalyses the reaction (2E,6E)-farnesyl diphosphate = (1E,4E)-germacrene B + diphosphate. The protein operates within secondary metabolite biosynthesis; terpenoid biosynthesis. Functionally, involved in the biosynthesis of germacrene B. The polypeptide is (E,E)-germacrene B synthase (SSTLH1) (Solanum habrochaites (Wild tomato)).